The chain runs to 286 residues: 4-diphosphocytidyl-2-C-methyl-D-erythritol kinase (286 aa).

Lys11 is a catalytic residue. Position 94–104 (Pro94–Ser104) interacts with ATP. Residue Asp136 is part of the active site.

The protein belongs to the GHMP kinase family. IspE subfamily.

The catalysed reaction is 4-CDP-2-C-methyl-D-erythritol + ATP = 4-CDP-2-C-methyl-D-erythritol 2-phosphate + ADP + H(+). It participates in isoprenoid biosynthesis; isopentenyl diphosphate biosynthesis via DXP pathway; isopentenyl diphosphate from 1-deoxy-D-xylulose 5-phosphate: step 3/6. In terms of biological role, catalyzes the phosphorylation of the position 2 hydroxy group of 4-diphosphocytidyl-2C-methyl-D-erythritol. This is 4-diphosphocytidyl-2-C-methyl-D-erythritol kinase from Pseudomonas entomophila (strain L48).